Here is a 313-residue protein sequence, read N- to C-terminus: Ribosomal protein L11 methyltransferase (313 aa).

The S-adenosyl-L-methionine site is built by Thr161, Gly182, Asp204, and Asn246.

Belongs to the methyltransferase superfamily. PrmA family.

It localises to the cytoplasm. The enzyme catalyses L-lysyl-[protein] + 3 S-adenosyl-L-methionine = N(6),N(6),N(6)-trimethyl-L-lysyl-[protein] + 3 S-adenosyl-L-homocysteine + 3 H(+). Methylates ribosomal protein L11. This is Ribosomal protein L11 methyltransferase from Acetivibrio thermocellus (strain ATCC 27405 / DSM 1237 / JCM 9322 / NBRC 103400 / NCIMB 10682 / NRRL B-4536 / VPI 7372) (Clostridium thermocellum).